The chain runs to 102 residues: Large ribosomal subunit protein bL21 (102 aa).

Belongs to the bacterial ribosomal protein bL21 family. As to quaternary structure, part of the 50S ribosomal subunit. Contacts protein L20.

This protein binds to 23S rRNA in the presence of protein L20. The polypeptide is Large ribosomal subunit protein bL21 (Sulfurimonas denitrificans (strain ATCC 33889 / DSM 1251) (Thiomicrospira denitrificans (strain ATCC 33889 / DSM 1251))).